Here is a 355-residue protein sequence, read N- to C-terminus: Elongation factor Ts (355 aa).

An involved in Mg(2+) ion dislocation from EF-Tu region spans residues Thr82 to Val85.

The protein belongs to the EF-Ts family.

The protein localises to the cytoplasm. Its function is as follows. Associates with the EF-Tu.GDP complex and induces the exchange of GDP to GTP. It remains bound to the aminoacyl-tRNA.EF-Tu.GTP complex up to the GTP hydrolysis stage on the ribosome. The protein is Elongation factor Ts (tsf) of Helicobacter pylori (strain J99 / ATCC 700824) (Campylobacter pylori J99).